The primary structure comprises 386 residues: Alkanesulfonate monooxygenase (386 aa).

It belongs to the SsuD family.

It catalyses the reaction an alkanesulfonate + FMNH2 + O2 = an aldehyde + FMN + sulfite + H2O + 2 H(+). In terms of biological role, catalyzes the desulfonation of aliphatic sulfonates. The protein is Alkanesulfonate monooxygenase of Paraburkholderia phytofirmans (strain DSM 17436 / LMG 22146 / PsJN) (Burkholderia phytofirmans).